Here is a 216-residue protein sequence, read N- to C-terminus: Large ribosomal subunit protein uL3 (216 aa).

Gln-157 carries the N5-methylglutamine modification.

Belongs to the universal ribosomal protein uL3 family. In terms of assembly, part of the 50S ribosomal subunit. Forms a cluster with proteins L14 and L19. In terms of processing, methylated by PrmB.

Its function is as follows. One of the primary rRNA binding proteins, it binds directly near the 3'-end of the 23S rRNA, where it nucleates assembly of the 50S subunit. The chain is Large ribosomal subunit protein uL3 from Xanthomonas oryzae pv. oryzae (strain MAFF 311018).